The following is a 116-amino-acid chain: Aspartate 1-decarboxylase (116 aa).

S25 (schiff-base intermediate with substrate; via pyruvic acid) is an active-site residue. The residue at position 25 (S25) is a Pyruvic acid (Ser). T57 contacts substrate. Y58 serves as the catalytic Proton donor. G73–A75 contributes to the substrate binding site.

This sequence belongs to the PanD family. As to quaternary structure, heterooctamer of four alpha and four beta subunits. Pyruvate serves as cofactor. Post-translationally, is synthesized initially as an inactive proenzyme, which is activated by self-cleavage at a specific serine bond to produce a beta-subunit with a hydroxyl group at its C-terminus and an alpha-subunit with a pyruvoyl group at its N-terminus.

Its subcellular location is the cytoplasm. It carries out the reaction L-aspartate + H(+) = beta-alanine + CO2. It participates in cofactor biosynthesis; (R)-pantothenate biosynthesis; beta-alanine from L-aspartate: step 1/1. Its function is as follows. Catalyzes the pyruvoyl-dependent decarboxylation of aspartate to produce beta-alanine. The chain is Aspartate 1-decarboxylase from Christiangramia forsetii (strain DSM 17595 / CGMCC 1.15422 / KT0803) (Gramella forsetii).